The following is a 716-amino-acid chain: Fatty acid oxidation complex subunit alpha (716 aa).

The tract at residues 1–188 (MIYQSPTIQV…KVGAIDAVVA (188 aa)) is enoyl-CoA hydratase/isomerase. Residue Asp295 participates in substrate binding. The segment at 310–716 (KDIKHAAVLG…SNNGSYYPKA (407 aa)) is 3-hydroxyacyl-CoA dehydrogenase. Residues Met323, Asp342, 399-401 (VVE), Lys406, and Ser428 contribute to the NAD(+) site. His449 (for 3-hydroxyacyl-CoA dehydrogenase activity) is an active-site residue. Asn452 is a binding site for NAD(+). Asn499 and Tyr659 together coordinate substrate.

It in the N-terminal section; belongs to the enoyl-CoA hydratase/isomerase family. In the C-terminal section; belongs to the 3-hydroxyacyl-CoA dehydrogenase family. As to quaternary structure, heterotetramer of two alpha chains (FadB) and two beta chains (FadA).

It carries out the reaction a (3S)-3-hydroxyacyl-CoA + NAD(+) = a 3-oxoacyl-CoA + NADH + H(+). The catalysed reaction is a (3S)-3-hydroxyacyl-CoA = a (2E)-enoyl-CoA + H2O. It catalyses the reaction a 4-saturated-(3S)-3-hydroxyacyl-CoA = a (3E)-enoyl-CoA + H2O. The enzyme catalyses (3S)-3-hydroxybutanoyl-CoA = (3R)-3-hydroxybutanoyl-CoA. It carries out the reaction a (3Z)-enoyl-CoA = a 4-saturated (2E)-enoyl-CoA. The catalysed reaction is a (3E)-enoyl-CoA = a 4-saturated (2E)-enoyl-CoA. It participates in lipid metabolism; fatty acid beta-oxidation. Functionally, involved in the aerobic and anaerobic degradation of long-chain fatty acids via beta-oxidation cycle. Catalyzes the formation of 3-oxoacyl-CoA from enoyl-CoA via L-3-hydroxyacyl-CoA. It can also use D-3-hydroxyacyl-CoA and cis-3-enoyl-CoA as substrate. This chain is Fatty acid oxidation complex subunit alpha, found in Shewanella amazonensis (strain ATCC BAA-1098 / SB2B).